Here is a 251-residue protein sequence, read N- to C-terminus: Cell division protein ZapD (251 aa).

This sequence belongs to the ZapD family. As to quaternary structure, interacts with FtsZ.

It localises to the cytoplasm. In terms of biological role, cell division factor that enhances FtsZ-ring assembly. Directly interacts with FtsZ and promotes bundling of FtsZ protofilaments, with a reduction in FtsZ GTPase activity. In Nitrosomonas eutropha (strain DSM 101675 / C91 / Nm57), this protein is Cell division protein ZapD.